The following is a 345-amino-acid chain: Phenylalanine--tRNA ligase alpha subunit (345 aa).

Glu259 contributes to the Mg(2+) binding site.

It belongs to the class-II aminoacyl-tRNA synthetase family. Phe-tRNA synthetase alpha subunit type 1 subfamily. Tetramer of two alpha and two beta subunits. It depends on Mg(2+) as a cofactor.

It is found in the cytoplasm. The catalysed reaction is tRNA(Phe) + L-phenylalanine + ATP = L-phenylalanyl-tRNA(Phe) + AMP + diphosphate + H(+). The polypeptide is Phenylalanine--tRNA ligase alpha subunit (Lactococcus lactis subsp. cremoris (strain SK11)).